The following is a 94-amino-acid chain: Small ribosomal subunit protein uS19 (94 aa).

The protein belongs to the universal ribosomal protein uS19 family.

Protein S19 forms a complex with S13 that binds strongly to the 16S ribosomal RNA. This is Small ribosomal subunit protein uS19 from Wolbachia pipientis wMel.